Here is an 88-residue protein sequence, read N- to C-terminus: UPF0250 protein Sfri_0694 (88 aa).

Belongs to the UPF0250 family.

The protein is UPF0250 protein Sfri_0694 of Shewanella frigidimarina (strain NCIMB 400).